A 117-amino-acid polypeptide reads, in one-letter code: Large ribosomal subunit protein bL20c (117 aa).

It belongs to the bacterial ribosomal protein bL20 family.

Its subcellular location is the plastid. It localises to the chloroplast. Its function is as follows. Binds directly to 23S ribosomal RNA and is necessary for the in vitro assembly process of the 50S ribosomal subunit. It is not involved in the protein synthesizing functions of that subunit. The chain is Large ribosomal subunit protein bL20c from Populus alba (White poplar).